A 239-amino-acid polypeptide reads, in one-letter code: Hexuronic acid methyltransferase AglP (239 aa).

This sequence belongs to the FkbM methyltransferase family.

The protein localises to the cytoplasm. Its pathway is cell surface structure biogenesis; S-layer biogenesis. Involved in the assembly of a N-linked pentasaccharide that decorates the S-layer glycoprotein and flagellins. S-adenosyl-L-methionine-dependent methyltransferase that modifies the hexuronic acid found at position 4 of the pentasaccharide. The chain is Hexuronic acid methyltransferase AglP (aglP) from Haloferax volcanii (strain ATCC 29605 / DSM 3757 / JCM 8879 / NBRC 14742 / NCIMB 2012 / VKM B-1768 / DS2) (Halobacterium volcanii).